We begin with the raw amino-acid sequence, 200 residues long: Late protein I196L (200 aa).

Tandem repeats lie at residues 28–48 (SNSL…PTTS) and 49–69 (SNSL…PTTS). The 3; approximate repeat unit spans residues 70-91 (SNYLTSAISTNISDKEEDTPFS).

This sequence belongs to the asfivirus I196L family.

The chain is Late protein I196L from African swine fever virus (isolate Tick/South Africa/Pretoriuskop Pr4/1996) (ASFV).